Consider the following 183-residue polypeptide: MRKLPRPFYERDTILVAKELLGKYLVHHDGLEEKIGRIVEVEAYLGQHDLACHSSKGLTKRTKVMFGPAGYAYVYLIYGMYYCMNVVTEKEGIGSAVLIRALEPIKNIQDRTQGPGLLSKAMRIDSKLNHRDLLSNDFYIAEPNSPTDFTIIEKPRIGVHYAKEWANELLRFYIKDNPYISKT.

It belongs to the DNA glycosylase MPG family.

The polypeptide is Putative 3-methyladenine DNA glycosylase (Legionella pneumophila (strain Corby)).